The primary structure comprises 967 residues: Disks large homolog 1 (967 aa).

Residues Ser5–Arg65 enclose the L27 domain. Positions Asn202–Lys289 constitute a PDZ 1 domain. The tract at residues Ile324–Gln351 is disordered. The segment covering Pro330 to Val339 has biased composition (pro residues). PDZ domains are found at residues Val361–Thr448 and Pro510–Pro591. An SH3 domain is found at Arg619–Glu690. Residues Glu673–Ser723 are disordered. Residues Ser682 to Gln696 are compositionally biased toward basic residues. Residues Val697–Leu715 show a composition bias toward polar residues. Residues Val769–Ser955 enclose the Guanylate kinase-like domain.

The protein belongs to the MAGUK family. As to quaternary structure, homooligomerizes; requires L27 domain. Interacts (via L27 domain) with ajm-1; the interaction regulates ajm-1 apical junction location. As to expression, expressed in the apical junctions in the hypodermis. Expressed in epithelial cells in the reproductive system including vulva, uterus and spermatheca.

Its subcellular location is the membrane. The protein resides in the apical cell membrane. It is found in the cell junction. The protein localises to the adherens junction. It localises to the lateral cell membrane. Its subcellular location is the cytoplasm. In terms of biological role, essential multidomain scaffolding protein required for normal development. Recruits channels, receptors and signaling molecules to discrete plasma membrane domains in polarized cells. Required for proper embryonic elongation. Acts upstream of ajm-1 and becomes localized to apical junctions independently of ajm-1. With let-413, cooperatively regulates ajm-1 localization to apical junctions and the establishment of newly formed epithelia. Plays a role in assembling the adherens junction by clustering ajm-1 and other proteins, to form electron-dense structures; may form a compartment distinct to that of hmp-1 and associated proteins. Plays a role in the directed outgrowth of seam cells, towards neighboring seam cells, during larval development. In Caenorhabditis elegans, this protein is Disks large homolog 1.